The sequence spans 301 residues: Homoserine O-acetyltransferase (301 aa).

Cys142 functions as the Acyl-thioester intermediate in the catalytic mechanism. Lys163 and Ser192 together coordinate substrate. His235 (proton acceptor) is an active-site residue. Residue Glu237 is part of the active site. Arg249 contributes to the substrate binding site.

Belongs to the MetA family.

The protein resides in the cytoplasm. It catalyses the reaction L-homoserine + acetyl-CoA = O-acetyl-L-homoserine + CoA. It participates in amino-acid biosynthesis; L-methionine biosynthesis via de novo pathway; O-acetyl-L-homoserine from L-homoserine: step 1/1. Functionally, transfers an acetyl group from acetyl-CoA to L-homoserine, forming acetyl-L-homoserine. The protein is Homoserine O-acetyltransferase of Bacillus mycoides (strain KBAB4) (Bacillus weihenstephanensis).